The primary structure comprises 294 residues: Phosphoprotein (294 aa).

The binding to monomeric RNA-free nucleoprotein stretch occupies residues M12 to K28. The interval K52–L97 is disordered. Residues P65–L97 are compositionally biased toward basic and acidic residues. At S106 the chain carries Phosphoserine. The binding to host phosphatase PP1 stretch occupies residues K123 to F128. Residues R135–S157 are binding to protein M2-1. Phosphoserine occurs at positions 148, 157, 158, 168, and 171. An oligomerization and binding to RNA-directed RNA polymerase L region spans residues A169 to N194. Positions M234 to M294 are disordered. Residues L251 to D279 are binding to RNA-directed RNA polymerase L. The segment covering E253–E263 has biased composition (basic and acidic residues). Positions D264–M294 are enriched in acidic residues. The tract at residues E281–M294 is binding to the N-RNA complex.

This sequence belongs to the pneumoviridae phosphoprotein P family. In terms of assembly, homotetramer. Interacts with protein M2-1; the interaction between the two tetramers is required for the anti-termination and elongation transcriptional activities of protein M2-1. Interacts with host phosphatase PP1; this interaction recruits PP1 to the inclusion bodies. Formation of a complex PP1/M2-1/P allows P to target host PP1 phosphatase to the M2-1 substrate. Interacts with the nucleoprotein N; the phosphorylated phosphoprotein P binds to N-RNA complex. Interacts with the monomeric RNA-free nucleoprotein N. Interacts with RNA-directed RNA polymerase L (via N-terminus); the association of P and L forms the polymerase complex. Constitutively phosphorylated by host.

It localises to the virion. Its subcellular location is the host cytoplasm. Plays critical roles in regulating RNA replication and transcription through its interactions with multiple proteins. Tethers the RNA-directed RNA polymerase L to the nucleoprotein-RNA complex. Recruits the M2-1 protein, a processivity factor that is required for efficient transcription of viral RNA. Acts as a chaperone for neo-synthesized nucleoprotein by forming an N-P complex that preserves N in a monomeric and RNA-free state and prevents the association of nascent N with host cell RNAs. Recruits the host phosphatase PP1 to inclusion bodies to regulate viral transcription. This Avian metapneumovirus (isolate Canada goose/Minnesota/15a/2001) (AMPV) protein is Phosphoprotein.